Reading from the N-terminus, the 635-residue chain is Extracellular metalloproteinase mep (635 aa).

Positions M1–A19 are cleaved as a signal peptide. The propeptide occupies H20–E246. An N-linked (GlcNAc...) asparagine glycan is attached at N287. Polar residues predominate over residues T290–L309. The interval T290–N311 is disordered. H430 is a Zn(2+) binding site. E431 is a catalytic residue. H434 lines the Zn(2+) pocket.

This sequence belongs to the peptidase M36 family. The cofactor is Zn(2+).

It localises to the secreted. In terms of biological role, secreted metalloproteinase that allows assimilation of proteinaceous substrates. This Aspergillus flavus (strain ATCC 200026 / FGSC A1120 / IAM 13836 / NRRL 3357 / JCM 12722 / SRRC 167) protein is Extracellular metalloproteinase mep (mep).